The primary structure comprises 448 residues: Homogentisate 1,2-dioxygenase (448 aa).

Fe cation contacts are provided by His340, Glu346, and His377.

The protein belongs to the homogentisate dioxygenase family. The cofactor is Fe cation.

The catalysed reaction is homogentisate + O2 = 4-maleylacetoacetate + H(+). Its pathway is amino-acid degradation; L-phenylalanine degradation; acetoacetate and fumarate from L-phenylalanine: step 4/6. This is Homogentisate 1,2-dioxygenase (hmgA) from Emericella nidulans (strain FGSC A4 / ATCC 38163 / CBS 112.46 / NRRL 194 / M139) (Aspergillus nidulans).